The following is a 361-amino-acid chain: 45 kDa calcium-binding protein (361 aa).

The first 35 residues, 1–35 (MVWLVAMTSRQRSLCGLAAHGLWFLGLVLLMDATA), serve as a signal peptide directing secretion. Asparagine 39 carries an N-linked (GlcNAc...) asparagine glycan. EF-hand domains lie at 97–132 (RSRR…KTAE) and 136–171 (EAVK…SKGH). Phosphoserine is present on serine 98. Ca(2+) is bound by residues aspartate 110, asparagine 112, aspartate 114, arginine 116, glutamate 121, aspartate 149, aspartate 151, aspartate 153, histidine 155, and glutamate 160. Threonine 192 is modified (phosphothreonine). EF-hand domains follow at residues 196–231 (LGNL…HSRG), 232–267 (MLKF…TVEN), 277–312 (WVKD…MNEY), and 313–348 (NALN…FTGS). Aspartate 212 lines the Ca(2+) pocket. A Phosphothreonine modification is found at threonine 216. Residues glutamate 219, aspartate 245, aspartate 247, aspartate 249, glutamine 251, and glutamate 256 each coordinate Ca(2+). Position 264 is a phosphothreonine (threonine 264). Aspartate 290, asparagine 292, and aspartate 294 together coordinate Ca(2+). Phosphothreonine is present on threonine 298. Positions 301, 326, 328, 330, 332, and 337 each coordinate Ca(2+). Residues 308–361 (PMNEYNALNEAKQMIAIADENQNHHLEPEEILKYSEFFTGSKLMDYARNVHEEF) are necessary for intracellular retention in Golgi apparatus lumen.

Belongs to the CREC family. As to quaternary structure, a membrane-associated isoform interacts with STX3 and STXBP1. As to expression, a membrane-associated isoform is expressed in acini of the pancreas (at protein level). Ubiquitous.

It is found in the golgi apparatus lumen. In terms of biological role, a membrane-associated isoform may be involved in the exocytosis of zymogens by pancreatic acini. May regulate calcium-dependent activities in the endoplasmic reticulum lumen or post-ER compartment. The chain is 45 kDa calcium-binding protein (Sdf4) from Rattus norvegicus (Rat).